A 332-amino-acid chain; its full sequence is Cytoplasmic phosphatidylinositol transfer protein 1 (332 aa).

Phosphoserine is present on residues Ser119, Ser122, Ser270, and Ser274. Residues 272-281 (PSSAPSTPLS) show a composition bias toward low complexity. Residues 272-332 (PSSAPSTPLS…SEKPCRPKSE (61 aa)) are disordered. Thr278 carries the phosphothreonine modification.

This sequence belongs to the PtdIns transfer protein family. PI transfer class IIB subfamily. In terms of tissue distribution, widely expressed in brain, with expression in the gray matters of pre- and postnatal brains. As to expression, weakly expressed in brain and is rather confined to the embryonic stage.

The protein resides in the cytoplasm. It is found in the nucleus. The enzyme catalyses a 1,2-diacyl-sn-glycero-3-phospho-(1D-myo-inositol)(in) = a 1,2-diacyl-sn-glycero-3-phospho-(1D-myo-inositol)(out). It carries out the reaction a 1,2-diacyl-sn-glycero-3-phosphate(in) = a 1,2-diacyl-sn-glycero-3-phosphate(out). Catalyzes the transfer of phosphatidylinositol (PI) and phosphatidic acid (PA) between membranes. Binds PA derived from the phospholipase D signaling pathway and among the cellular PA species, preferably binds to the C16:0/16:1 and C16:1/18:1 PA species. In terms of biological role, specifically binds to phosphatidylinositol but not to other phospholipids and may play a role in the phosphoinositide-mediated signaling in the neural development. In Mus musculus (Mouse), this protein is Cytoplasmic phosphatidylinositol transfer protein 1 (Pitpnc1).